A 461-amino-acid polypeptide reads, in one-letter code: Cysteine--tRNA ligase (461 aa).

Residue Cys29 participates in Zn(2+) binding. Residues 31-41 (MTVYDFCHIGH) carry the 'HIGH' region motif. Cys210, His235, and Glu239 together coordinate Zn(2+). Residues 267-271 (KMSKS) carry the 'KMSKS' region motif. An ATP-binding site is contributed by Lys270.

The protein belongs to the class-I aminoacyl-tRNA synthetase family. As to quaternary structure, monomer. Requires Zn(2+) as cofactor.

Its subcellular location is the cytoplasm. It carries out the reaction tRNA(Cys) + L-cysteine + ATP = L-cysteinyl-tRNA(Cys) + AMP + diphosphate. In Azotobacter vinelandii (strain DJ / ATCC BAA-1303), this protein is Cysteine--tRNA ligase.